Reading from the N-terminus, the 229-residue chain is Lactate utilization protein C (229 aa).

It belongs to the LutC/YkgG family.

Its function is as follows. Is involved in L-lactate degradation and allows cells to grow with lactate as the sole carbon source. This Shouchella clausii (strain KSM-K16) (Alkalihalobacillus clausii) protein is Lactate utilization protein C.